A 258-amino-acid chain; its full sequence is UPF0246 protein YE0603 (258 aa).

The protein belongs to the UPF0246 family.

This chain is UPF0246 protein YE0603, found in Yersinia enterocolitica serotype O:8 / biotype 1B (strain NCTC 13174 / 8081).